We begin with the raw amino-acid sequence, 450 residues long: 3-phosphoshikimate 1-carboxyvinyltransferase (450 aa).

Positions 28, 29, and 33 each coordinate 3-phosphoshikimate. Residue lysine 28 coordinates phosphoenolpyruvate. 2 residues coordinate phosphoenolpyruvate: glycine 100 and arginine 128. 4 residues coordinate 3-phosphoshikimate: serine 173, glutamine 175, aspartate 326, and lysine 353. Phosphoenolpyruvate is bound at residue glutamine 175. Aspartate 326 functions as the Proton acceptor in the catalytic mechanism. 2 residues coordinate phosphoenolpyruvate: arginine 357 and arginine 402.

The protein belongs to the EPSP synthase family. As to quaternary structure, monomer.

The protein resides in the cytoplasm. It carries out the reaction 3-phosphoshikimate + phosphoenolpyruvate = 5-O-(1-carboxyvinyl)-3-phosphoshikimate + phosphate. Its pathway is metabolic intermediate biosynthesis; chorismate biosynthesis; chorismate from D-erythrose 4-phosphate and phosphoenolpyruvate: step 6/7. Functionally, catalyzes the transfer of the enolpyruvyl moiety of phosphoenolpyruvate (PEP) to the 5-hydroxyl of shikimate-3-phosphate (S3P) to produce enolpyruvyl shikimate-3-phosphate and inorganic phosphate. This Brucella canis (strain ATCC 23365 / NCTC 10854 / RM-666) protein is 3-phosphoshikimate 1-carboxyvinyltransferase.